A 282-amino-acid polypeptide reads, in one-letter code: MIFLIAIIPALCWGINPLLVGKINGHSENEMFGMGIGDGLIALIFWLFSQPTVTISGVTFGLAMISGAAWAIGQLGQYISYRLLGVSKTMPISTALQLVGTSLIGVLMFGEWGSSNQKILGLLAIMLIVAGSALSAGTSDGRKKGFSCYLPLLMTTIGYWIYSCIPKLVKVDALQLFLPQMLGILIVAVGWAIYHQPTVYRDKQSWQNTLPGILYGIAAFMYILSARSIGVTNAYIIGQLSVVISTLSGLFFLHERTGQQSIVSVATGLLFIFMGCVTTALI.

10 consecutive transmembrane segments (helical) span residues 2-21 (IFLI…LLVG), 31-48 (MFGM…FWLF), 53-75 (VTIS…IGQL), 90-112 (MPIS…FGEW), 119-136 (ILGL…ALSA), 146-163 (FSCY…WIYS), 176-194 (LFLP…WAIY), 209-226 (TLPG…ILSA), 233-252 (NAYI…GLFF), and 262-281 (IVSV…TTAL).

Belongs to the GRP transporter (TC 2.A.7.5) family.

It is found in the cell membrane. This is Putative sugar uptake protein lp_2594 from Lactiplantibacillus plantarum (strain ATCC BAA-793 / NCIMB 8826 / WCFS1) (Lactobacillus plantarum).